A 31-amino-acid polypeptide reads, in one-letter code: Putative gene 37 protein (31 aa).

This Bacillus subtilis (Bacteriophage SP01) protein is Putative gene 37 protein (37).